A 290-amino-acid chain; its full sequence is 33 kDa chaperonin (290 aa).

Disulfide bonds link C235–C237 and C268–C271.

The protein belongs to the HSP33 family. In terms of processing, under oxidizing conditions two disulfide bonds are formed involving the reactive cysteines. Under reducing conditions zinc is bound to the reactive cysteines and the protein is inactive.

The protein resides in the cytoplasm. In terms of biological role, redox regulated molecular chaperone. Protects both thermally unfolding and oxidatively damaged proteins from irreversible aggregation. Plays an important role in the bacterial defense system toward oxidative stress. In Streptococcus pyogenes serotype M1, this protein is 33 kDa chaperonin.